A 301-amino-acid chain; its full sequence is Thiosulfate sulfurtransferase (301 aa).

Rhodanese domains are found at residues 31-138 (GSPG…DTSY) and 171-289 (QSGG…MPIE). Catalysis depends on C248, which acts as the Cysteine persulfide intermediate. R253 serves as a coordination point for substrate.

It carries out the reaction thiosulfate + hydrogen cyanide = thiocyanate + sulfite + 2 H(+). This chain is Thiosulfate sulfurtransferase (thtR), found in Corynebacterium glutamicum (strain ATCC 13032 / DSM 20300 / JCM 1318 / BCRC 11384 / CCUG 27702 / LMG 3730 / NBRC 12168 / NCIMB 10025 / NRRL B-2784 / 534).